Consider the following 548-residue polypeptide: Chaperonin GroEL (548 aa).

Residues T30–P33, K51, D87–T91, G415, N479–A481, and D495 each bind ATP.

This sequence belongs to the chaperonin (HSP60) family. As to quaternary structure, forms a cylinder of 14 subunits composed of two heptameric rings stacked back-to-back. Interacts with the co-chaperonin GroES.

It localises to the cytoplasm. It catalyses the reaction ATP + H2O + a folded polypeptide = ADP + phosphate + an unfolded polypeptide.. Its function is as follows. Together with its co-chaperonin GroES, plays an essential role in assisting protein folding. The GroEL-GroES system forms a nano-cage that allows encapsulation of the non-native substrate proteins and provides a physical environment optimized to promote and accelerate protein folding. The sequence is that of Chaperonin GroEL from Salmonella gallinarum (strain 287/91 / NCTC 13346).